The sequence spans 248 residues: PACRG-like protein (248 aa).

Residue Met1 is modified to N-acetylmethionine. Residues 1–72 form a disordered region; sequence MQRSECSGGV…NPKTINPFGE (72 aa). Composition is skewed to polar residues over residues 14–29 and 36–45; these read NRATGSNDQRTSSSTQ and VQRSKSSSLT. Ser47 is subject to Phosphoserine.

The chain is PACRG-like protein (Pacrgl) from Mus musculus (Mouse).